Consider the following 509-residue polypeptide: Scavenger receptor class B member 1 (509 aa).

Residues 1–11 (MGGSARARWVA) are Cytoplasmic-facing. Residues 12–32 (VGLGVVGLLCAVLGVVMILVM) traverse the membrane as a helical segment. Topologically, residues 33–440 (PSLIKQQVLK…YTQLVLMPQV (408 aa)) are extracellular. N-linked (GlcNAc...) asparagine glycosylation is found at Asn-102, Asn-108, Asn-173, Asn-212, Asn-227, Asn-255, Asn-310, Asn-330, and Asn-383. Cys-251 and Cys-384 form a disulfide bridge. Residues 441–461 (LQYVQYVLLGLGGLLLLVPVI) traverse the membrane as a helical segment. Residues 462–509 (YQLRSQEKCFLFWSGSKKGSQDKEAIQAYSESLMSPAAKGTVLQEAKL) are Cytoplasmic-facing.

It belongs to the CD36 family. In terms of processing, N-glycosylated. Post-translationally, the six cysteines of the extracellular domain are all involved in intramolecular disulfide bonds.

Its subcellular location is the cell membrane. It localises to the membrane. The protein localises to the caveola. Functionally, receptor for different ligands such as phospholipids, cholesterol ester, lipoproteins, phosphatidylserine and apoptotic cells. Receptor for HDL, mediating selective uptake of cholesteryl ether and HDL-dependent cholesterol efflux. Also facilitates the flux of free and esterified cholesterol between the cell surface and apoB-containing lipoproteins and modified lipoproteins, although less efficiently than HDL. May be involved in the phagocytosis of apoptotic cells, via its phosphatidylserine binding activity. The polypeptide is Scavenger receptor class B member 1 (SCARB1) (Cricetulus griseus (Chinese hamster)).